Consider the following 171-residue polypeptide: Peptide deformylase (171 aa).

Residues Cys-87 and His-129 each coordinate Fe cation. Glu-130 is an active-site residue. His-133 lines the Fe cation pocket.

Belongs to the polypeptide deformylase family. Fe(2+) serves as cofactor.

The enzyme catalyses N-terminal N-formyl-L-methionyl-[peptide] + H2O = N-terminal L-methionyl-[peptide] + formate. Removes the formyl group from the N-terminal Met of newly synthesized proteins. Requires at least a dipeptide for an efficient rate of reaction. N-terminal L-methionine is a prerequisite for activity but the enzyme has broad specificity at other positions. The polypeptide is Peptide deformylase (Pseudothermotoga lettingae (strain ATCC BAA-301 / DSM 14385 / NBRC 107922 / TMO) (Thermotoga lettingae)).